We begin with the raw amino-acid sequence, 219 residues long: Large ribosomal subunit protein uL3 (219 aa).

Residues 113–142 form a disordered region; it reads TTKGHGYQGNIHKDNQSRGPMAHGSRYHRR.

This sequence belongs to the universal ribosomal protein uL3 family. Part of the 50S ribosomal subunit. Forms a cluster with proteins L14 and L19.

Its function is as follows. One of the primary rRNA binding proteins, it binds directly near the 3'-end of the 23S rRNA, where it nucleates assembly of the 50S subunit. The chain is Large ribosomal subunit protein uL3 from Limosilactobacillus reuteri (strain DSM 20016) (Lactobacillus reuteri).